A 159-amino-acid chain; its full sequence is Succinate dehydrogenase assembly factor 2, mitochondrial (159 aa).

The N-terminal 14 residues, 1–14, are a transit peptide targeting the mitochondrion; sequence MASFCLSRCCALRG.

The protein belongs to the SDHAF2 family. As to quaternary structure, interacts with the flavoprotein subunit within the SDH catalytic dimer.

It is found in the mitochondrion matrix. In terms of biological role, plays an essential role in the assembly of succinate dehydrogenase (SDH), an enzyme complex (also referred to as respiratory complex II) that is a component of both the tricarboxylic acid (TCA) cycle and the mitochondrial electron transport chain, and which couples the oxidation of succinate to fumarate with the reduction of ubiquinone (coenzyme Q) to ubiquinol. Required for flavinylation (covalent attachment of FAD) of the flavoprotein subunit of the SDH catalytic dimer. This Culex quinquefasciatus (Southern house mosquito) protein is Succinate dehydrogenase assembly factor 2, mitochondrial.